The primary structure comprises 186 residues: Elongation factor P (186 aa).

The protein belongs to the elongation factor P family.

The protein resides in the cytoplasm. It functions in the pathway protein biosynthesis; polypeptide chain elongation. Involved in peptide bond synthesis. Stimulates efficient translation and peptide-bond synthesis on native or reconstituted 70S ribosomes in vitro. Probably functions indirectly by altering the affinity of the ribosome for aminoacyl-tRNA, thus increasing their reactivity as acceptors for peptidyl transferase. The sequence is that of Elongation factor P from Shewanella halifaxensis (strain HAW-EB4).